The primary structure comprises 916 residues: Cadherin-4 (916 aa).

The N-terminal stretch at 1 to 20 (MTAGAGVLLLLLSLSGALRA) is a signal peptide. The propeptide occupies 21-169 (HNEDLTTRET…NANGLRRRKR (149 aa)). A disordered region spans residues 124 to 168 (TSSPHSGHKPQKGKKVVALDPSPPPKDTLLPWPQHQNANGLRRRK). The segment covering 129-138 (SGHKPQKGKK) has biased composition (basic residues). 5 consecutive Cadherin domains span residues 170–277 (DWVI…RPEF), 278–392 (INQV…PPEF), 393–507 (TAST…APYF), 508–613 (PSNH…DNAP), and 614–724 (ELLP…TIGA). The Extracellular segment spans residues 170-734 (DWVIPPINVP…VAAAGLGTGA (565 aa)). Residues Asn283, Asn412, Asn557, Asn632, Asn661, and Asn702 are each glycosylated (N-linked (GlcNAc...) asparagine). The helical transmembrane segment at 735 to 756 (IVAILICILILLTMVLLFVMWM) threads the bilayer. Residues 757-916 (KRREKERHTK…ADMYGGGEED (160 aa)) lie on the Cytoplasmic side of the membrane. A disordered region spans residues 806 to 838 (MGHVPSKAPGVRRVDERPVGAEPQYPIRPMVPH).

In terms of tissue distribution, expressed mainly in brain but also found in other tissues.

The protein localises to the cell membrane. Functionally, cadherins are calcium-dependent cell adhesion proteins. They preferentially interact with themselves in a homophilic manner in connecting cells; cadherins may thus contribute to the sorting of heterogeneous cell types. May play an important role in retinal development. In Homo sapiens (Human), this protein is Cadherin-4 (CDH4).